The chain runs to 366 residues: Zinc finger protein ubi-d4 B (366 aa).

2 disordered regions span residues 41 to 94 (ASAP…DGSS) and 140 to 167 (DDLD…IGGA). Residues 76 to 86 (PDPEQMLKKEG) are compositionally biased toward basic and acidic residues. Residues 140-149 (DDLDDEDYEE) are compositionally biased toward acidic residues. The C2H2-type zinc-finger motif lies at 183 to 206 (YACDICGKRYKNRPGLSYHYAHSH). A disordered region spans residues 211–243 (EGAGAEDKEDSQPPTPIMHRSEEQKSKKGPDGL). Basic and acidic residues predominate over residues 229–240 (HRSEEQKSKKGP). 2 consecutive PHD-type zinc fingers follow at residues 247 to 307 (NNYC…CKCC) and 304 to 354 (CKCC…CLDL).

The protein belongs to the requiem/DPF family.

It is found in the cytoplasm. The protein resides in the nucleus. In terms of biological role, may be a transcription factor required for the apoptosis response following survival factor withdrawal from myeloid cells. Might also have a role in the development and maturation of lymphoid cells. This chain is Zinc finger protein ubi-d4 B (req-b), found in Xenopus laevis (African clawed frog).